The primary structure comprises 506 residues: Anaerobic nitric oxide reductase transcription regulator NorR (506 aa).

At D57 the chain carries 4-aspartylphosphate. Residues 187 to 416 enclose the Sigma-54 factor interaction domain; that stretch reads MIGLSPAMTQ…LEHAIHRAVV (230 aa). Residues 215 to 222 and 278 to 287 contribute to the ATP site; these read GETGTGKE and ADNGTLFLDE. A DNA-binding region (H-T-H motif) is located at residues 481–500; that stretch reads WAASARALETDVANLHRLAK.

The protein operates within nitrogen metabolism; nitric oxide reduction. Functionally, required for the expression of anaerobic nitric oxide (NO) reductase, acts as a transcriptional activator for at least the norVW operon. Activation also requires sigma-54. This is Anaerobic nitric oxide reductase transcription regulator NorR from Salmonella paratyphi A (strain ATCC 9150 / SARB42).